A 201-amino-acid polypeptide reads, in one-letter code: Recombination protein RecR (201 aa).

The segment at 57–72 (CKYCRTFTEQEQCTIC) adopts a C4-type zinc-finger fold. A Toprim domain is found at 81–176 (GQICVVESPA…TASRIAHGVP (96 aa)).

The protein belongs to the RecR family.

In terms of biological role, may play a role in DNA repair. It seems to be involved in an RecBC-independent recombinational process of DNA repair. It may act with RecF and RecO. The chain is Recombination protein RecR from Photorhabdus laumondii subsp. laumondii (strain DSM 15139 / CIP 105565 / TT01) (Photorhabdus luminescens subsp. laumondii).